Here is a 338-residue protein sequence, read N- to C-terminus: Cytochrome bd ubiquinol oxidase subunit 2 (338 aa).

The next 9 helical transmembrane spans lie at 7 to 27 (LWFI…GFDF), 50 to 70 (IGPF…AIFA), 75 to 95 (WYAT…LALM), 119 to 139 (VVFF…TTLF), 163 to 183 (ILGG…FITL), 196 to 216 (MAQK…ALSA), 227 to 247 (EITI…AVFI), 256 to 276 (FGMT…SLFP), and 306 to 326 (IAAL…YYVF).

Belongs to the cytochrome ubiquinol oxidase subunit 2 family. In terms of assembly, heterodimer of subunits I and II. Heme b serves as cofactor. The cofactor is heme d cis-diol.

It localises to the cell membrane. The catalysed reaction is 2 a ubiquinol + O2(in) + 4 H(+)(in) = 2 a ubiquinone + 2 H2O(in) + 4 H(+)(out). This Bacillus subtilis (strain 168) protein is Cytochrome bd ubiquinol oxidase subunit 2 (cydB).